Here is a 233-residue protein sequence, read N- to C-terminus: Orotate phosphoribosyltransferase (233 aa).

Lysine 29 provides a ligand contact to 5-phospho-alpha-D-ribose 1-diphosphate. Position 37–38 (37–38 (FF)) interacts with orotate. 5-phospho-alpha-D-ribose 1-diphosphate-binding positions include 79-80 (YK), arginine 109, lysine 110, lysine 113, histidine 115, and 135-143 (DDVITAGTA). Orotate-binding residues include threonine 139 and arginine 167.

It belongs to the purine/pyrimidine phosphoribosyltransferase family. PyrE subfamily. As to quaternary structure, homodimer.

The catalysed reaction is orotidine 5'-phosphate + diphosphate = orotate + 5-phospho-alpha-D-ribose 1-diphosphate. It participates in pyrimidine metabolism; UMP biosynthesis via de novo pathway; UMP from orotate: step 1/2. Functionally, catalyzes the transfer of a ribosyl phosphate group from 5-phosphoribose 1-diphosphate to orotate, leading to the formation of orotidine monophosphate (OMP). This chain is Orotate phosphoribosyltransferase (ura-5), found in Neurospora crassa (strain ATCC 24698 / 74-OR23-1A / CBS 708.71 / DSM 1257 / FGSC 987).